A 297-amino-acid chain; its full sequence is 4-diphosphocytidyl-2-C-methyl-D-erythritol kinase (297 aa).

Lysine 10 is a catalytic residue. Residue 94-104 coordinates ATP; that stretch reads PVAAGLAGGSS. The active site involves aspartate 136.

The protein belongs to the GHMP kinase family. IspE subfamily.

It catalyses the reaction 4-CDP-2-C-methyl-D-erythritol + ATP = 4-CDP-2-C-methyl-D-erythritol 2-phosphate + ADP + H(+). The protein operates within isoprenoid biosynthesis; isopentenyl diphosphate biosynthesis via DXP pathway; isopentenyl diphosphate from 1-deoxy-D-xylulose 5-phosphate: step 3/6. Catalyzes the phosphorylation of the position 2 hydroxy group of 4-diphosphocytidyl-2C-methyl-D-erythritol. In Shouchella clausii (strain KSM-K16) (Alkalihalobacillus clausii), this protein is 4-diphosphocytidyl-2-C-methyl-D-erythritol kinase.